A 173-amino-acid polypeptide reads, in one-letter code: Photosystem I assembly protein Ycf3 (173 aa).

3 TPR repeats span residues 35–68, 72–105, and 120–153; these read AFVYYRDGMSAQAEGEYAEALEYYEEALTLEEDT, GYILYNMGLIYASNGDHDKALELYHQAIELNPRL, and GEKAKETGDHDGGEALFDQAADYWIRAIRMAPNN.

Belongs to the Ycf3 family.

It localises to the cellular thylakoid membrane. Essential for the assembly of the photosystem I (PSI) complex. May act as a chaperone-like factor to guide the assembly of the PSI subunits. The protein is Photosystem I assembly protein Ycf3 of Nostoc sp. (strain PCC 7120 / SAG 25.82 / UTEX 2576).